A 134-amino-acid polypeptide reads, in one-letter code: Ribosome-binding factor A (134 aa).

It belongs to the RbfA family. Monomer. Binds 30S ribosomal subunits, but not 50S ribosomal subunits or 70S ribosomes.

The protein localises to the cytoplasm. One of several proteins that assist in the late maturation steps of the functional core of the 30S ribosomal subunit. Associates with free 30S ribosomal subunits (but not with 30S subunits that are part of 70S ribosomes or polysomes). Required for efficient processing of 16S rRNA. May interact with the 5'-terminal helix region of 16S rRNA. The chain is Ribosome-binding factor A from Bartonella bacilliformis (strain ATCC 35685 / KC583 / Herrer 020/F12,63).